Here is a 417-residue protein sequence, read N- to C-terminus: MTNPEDIPSRIEGKNVARLVCCFLGVGSLVAWNAMLTITDYYYQLFPKYHPSRVLTIVYQLVANVFIITLATKEAKLNTRLRNIFGYSLYTAGTFCLIILDLASHGSGSVVAYVLLCLIVALFGLADAFVQGAMVGDLSFMSPDFIQAFMAGLGIAGALTSVLRLITKAIFDNSPDGLRKGALLFIGIATLIELACVFLYTLVFAKLPIVKYYRAKAGKEGAKTVSADLAAAGLQEQAEQVHQMDESKIQKLTKKQLLRENIDLGINLSLIYVVTLSIFPGFLYENTGEHRLGDWYAPVLVAMYNGWDAISRFIPSIKPLAMESRKWITVCVVARLLLVPAFYFTAKYADQGWMLFLTSFLGLSNGYLTVCIFSTAPKGYNGPEANALGNLMCVFLLGGIFAGVCLGWLWLIGNDSF.

11 helical membrane-spanning segments follow: residues 19 to 39 (LVCCFLGVGSLVAWNAMLTIT), 54 to 74 (VLTIVYQLVANVFIITLATKE), 84 to 104 (IFGYSLYTAGTFCLIILDLAS), 110 to 130 (VVAYVLLCLIVALFGLADAFV), 143 to 163 (PDFIQAFMAGLGIAGALTSVL), 184 to 204 (LFIGIATLIELACVFLYTLVF), 264 to 284 (LGINLSLIYVVTLSIFPGFLY), 293 to 315 (GDWYAPVLVAMYNGWDAISRFIP), 326 to 346 (KWITVCVVARLLLVPAFYFTA), 353 to 373 (WMLFLTSFLGLSNGYLTVCIF), and 392 to 412 (MCVFLLGGIFAGVCLGWLWLI).

Belongs to the SLC29A/ENT transporter (TC 2.A.57) family. As to expression, expressed in leaves and flowers.

The protein localises to the cell membrane. In terms of biological role, nucleoside transporter that can mediate uptake of adenosine, uridine, guanosine or cytidine when expressed in a heterologous system (yeast). This Arabidopsis thaliana (Mouse-ear cress) protein is Equilibrative nucleotide transporter 7 (ENT7).